Consider the following 795-residue polypeptide: Mitochondrial intermediate peptidase (795 aa).

The N-terminal 22 residues, 1–22 (MLKTLNRRSWTCRQCIRILRRN), are a transit peptide targeting the mitochondrion. H561 contributes to the Zn(2+) binding site. E562 is a catalytic residue. Zn(2+) is bound by residues H565 and H568.

The protein belongs to the peptidase M3 family. It depends on Zn(2+) as a cofactor.

It is found in the mitochondrion matrix. The enzyme catalyses Release of an N-terminal octapeptide as second stage of processing of some proteins imported into the mitochondrion.. Cleaves proteins, imported into the mitochondrion, to their mature size. While most mitochondrial precursor proteins are processed to the mature form in one step by mitochondrial processing peptidase (MPP), the sequential cleavage by MIP of an octapeptide after initial processing by MPP is a required step for a subgroup of nuclear-encoded precursor proteins destined for the matrix or the inner membrane. In Coccidioides immitis (strain RS) (Valley fever fungus), this protein is Mitochondrial intermediate peptidase (OCT1).